We begin with the raw amino-acid sequence, 488 residues long: Inosine-5'-monophosphate dehydrogenase (488 aa).

2 consecutive CBS domains span residues 95 to 153 and 157 to 216; these read VISN…SIKI and MTKD…AKDE. NAD(+) is bound by residues Asp250 and 300-302; that span reads GIG. Residues Gly302 and Gly304 each coordinate K(+). Residue Ser305 participates in IMP binding. Residue Cys307 coordinates K(+). Cys307 acts as the Thioimidate intermediate in catalysis. Residues 340-342, 363-364, and 387-391 contribute to the IMP site; these read DGG, GS, and YRGMG. Residue Arg403 is the Proton acceptor of the active site. Residue Glu417 participates in IMP binding. Positions 467–488 are disordered; sequence AGLAESHPHNVQITKESPNYSF. K(+)-binding residues include Glu471, Ser472, and His473. The span at 475 to 488 shows a compositional bias: polar residues; that stretch reads HNVQITKESPNYSF.

It belongs to the IMPDH/GMPR family. As to quaternary structure, homotetramer. It depends on K(+) as a cofactor.

The enzyme catalyses IMP + NAD(+) + H2O = XMP + NADH + H(+). Its pathway is purine metabolism; XMP biosynthesis via de novo pathway; XMP from IMP: step 1/1. With respect to regulation, mycophenolic acid (MPA) is a non-competitive inhibitor that prevents formation of the closed enzyme conformation by binding to the same site as the amobile flap. In contrast, mizoribine monophosphate (MZP) is a competitive inhibitor that induces the closed conformation. MPA is a potent inhibitor of mammalian IMPDHs but a poor inhibitor of the bacterial enzymes. MZP is a more potent inhibitor of bacterial IMPDH. Functionally, catalyzes the conversion of inosine 5'-phosphate (IMP) to xanthosine 5'-phosphate (XMP), the first committed and rate-limiting step in the de novo synthesis of guanine nucleotides, and therefore plays an important role in the regulation of cell growth. The sequence is that of Inosine-5'-monophosphate dehydrogenase from Staphylococcus epidermidis (strain ATCC 35984 / DSM 28319 / BCRC 17069 / CCUG 31568 / BM 3577 / RP62A).